The following is a 448-amino-acid chain: Na(+)-malate symporter (448 aa).

Helical transmembrane passes span 31-51 (IGVI…LAAY), 60-80 (LGGF…GQRI), 86-106 (IGGP…YNVL), 123-143 (FLYF…NRIV), 153-173 (VPLV…GFIF), 182-202 (FFVV…PLSI), 214-234 (VFVS…IICA), 276-293 (LMGA…FGGL), 297-319 (FIFI…ANIL), 333-353 (FISS…FIPL), and 359-379 (VISI…IGSG).

Belongs to the 2-hydroxycarboxylate transporter (2-HCT) (TC 2.A.24) family.

Its subcellular location is the cell membrane. Acts as a Na(+)-malate symporter, as it catalyzes malate-dependent uptake of Na(+) and Na(+)-dependent uptake of malate. The polypeptide is Na(+)-malate symporter (Bacillus subtilis (strain 168)).